We begin with the raw amino-acid sequence, 434 residues long: Chaperone SurA (434 aa).

A signal peptide spans 1–22 (MKHSKKIIFALLALAMSNTSMA). PpiC domains follow at residues 173–274 (DVEF…KVVD) and 283–383 (VEEV…QLES).

It localises to the periplasm. It carries out the reaction [protein]-peptidylproline (omega=180) = [protein]-peptidylproline (omega=0). In terms of biological role, chaperone involved in the correct folding and assembly of outer membrane proteins. Recognizes specific patterns of aromatic residues and the orientation of their side chains, which are found more frequently in integral outer membrane proteins. May act in both early periplasmic and late outer membrane-associated steps of protein maturation. In Shewanella frigidimarina (strain NCIMB 400), this protein is Chaperone SurA.